Here is a 78-residue protein sequence, read N- to C-terminus: Acyl carrier protein (78 aa).

In terms of domain architecture, Carrier spans 2–77 (DDLFKKIQQL…DAYEFIKSQQ (76 aa)). Ser-37 is modified (O-(pantetheine 4'-phosphoryl)serine).

Belongs to the acyl carrier protein (ACP) family. 4'-phosphopantetheine is transferred from CoA to a specific serine of apo-ACP by AcpS. This modification is essential for activity because fatty acids are bound in thioester linkage to the sulfhydryl of the prosthetic group.

The protein resides in the cytoplasm. It functions in the pathway lipid metabolism; fatty acid biosynthesis. Its function is as follows. Carrier of the growing fatty acid chain in fatty acid biosynthesis. The sequence is that of Acyl carrier protein from Treponema denticola (strain ATCC 35405 / DSM 14222 / CIP 103919 / JCM 8153 / KCTC 15104).